Consider the following 135-residue polypeptide: Mediator of RNA polymerase II transcription subunit 10 (135 aa).

Belongs to the Mediator complex subunit 10 family. As to quaternary structure, component of the Mediator complex, which is composed of MED1, MED4, MED6, MED7, MED8, MED9, MED10, MED11, MED12, MED13, MED13L, MED14, MED15, MED16, MED17, MED18, MED19, MED20, MED21, MED22, MED23, MED24, MED25, MED26, MED27, MED29, MED30, MED31, CCNC, CDK8 and CDC2L6/CDK11. The MED12, MED13, CCNC and CDK8 subunits form a distinct module termed the CDK8 module. Mediator containing the CDK8 module is less active than Mediator lacking this module in supporting transcriptional activation. Individual preparations of the Mediator complex lacking one or more distinct subunits have been variously termed ARC, CRSP, DRIP, PC2, SMCC and TRAP.

The protein resides in the nucleus. Functionally, component of the Mediator complex, a coactivator involved in the regulated transcription of nearly all RNA polymerase II-dependent genes. Mediator functions as a bridge to convey information from gene-specific regulatory proteins to the basal RNA polymerase II transcription machinery. Mediator is recruited to promoters by direct interactions with regulatory proteins and serves as a scaffold for the assembly of a functional preinitiation complex with RNA polymerase II and the general transcription factors. This chain is Mediator of RNA polymerase II transcription subunit 10 (MED10), found in Macaca fascicularis (Crab-eating macaque).